We begin with the raw amino-acid sequence, 291 residues long: Small ribosomal subunit biogenesis GTPase RsgA (291 aa).

Residues 63–221 (KNEIKRPPVS…IADTPGFSAL (159 aa)) form the CP-type G domain. Residues 112 to 115 (TKKD) and 164 to 172 (GQSGVGKST) each bind GTP. 4 residues coordinate Zn(2+): Cys245, Cys250, His252, and Cys258.

The protein belongs to the TRAFAC class YlqF/YawG GTPase family. RsgA subfamily. As to quaternary structure, monomer. Associates with 30S ribosomal subunit, binds 16S rRNA. Requires Zn(2+) as cofactor.

It localises to the cytoplasm. In terms of biological role, one of several proteins that assist in the late maturation steps of the functional core of the 30S ribosomal subunit. Helps release RbfA from mature subunits. May play a role in the assembly of ribosomal proteins into the subunit. Circularly permuted GTPase that catalyzes slow GTP hydrolysis, GTPase activity is stimulated by the 30S ribosomal subunit. The sequence is that of Small ribosomal subunit biogenesis GTPase RsgA from Staphylococcus saprophyticus subsp. saprophyticus (strain ATCC 15305 / DSM 20229 / NCIMB 8711 / NCTC 7292 / S-41).